The primary structure comprises 352 residues: Small ribosomal subunit biogenesis GTPase RsgA 2 (352 aa).

Residues 100-257 (RQDGQIIATN…VIDTPGMREL (158 aa)) enclose the CP-type G domain. GTP contacts are provided by residues 147–150 (TKAD) and 199–207 (GSSGVGKST). Zn(2+) contacts are provided by Cys278, Cys283, His285, and Cys291.

It belongs to the TRAFAC class YlqF/YawG GTPase family. RsgA subfamily. As to quaternary structure, monomer. Associates with 30S ribosomal subunit, binds 16S rRNA. Requires Zn(2+) as cofactor.

The protein resides in the cytoplasm. Functionally, one of several proteins that assist in the late maturation steps of the functional core of the 30S ribosomal subunit. Helps release RbfA from mature subunits. May play a role in the assembly of ribosomal proteins into the subunit. Circularly permuted GTPase that catalyzes slow GTP hydrolysis, GTPase activity is stimulated by the 30S ribosomal subunit. The polypeptide is Small ribosomal subunit biogenesis GTPase RsgA 2 (Lactiplantibacillus plantarum (strain ATCC BAA-793 / NCIMB 8826 / WCFS1) (Lactobacillus plantarum)).